A 1290-amino-acid polypeptide reads, in one-letter code: Vacuolating cytotoxin autotransporter (1290 aa).

An N-terminal signal peptide occupies residues 1–33 (MEIQQTHRKINRPLVSLALVGALVSITPQQSHA). The interval 326–374 (PPEGGYKDKPKDKPSNTTQNNANNNQQNSAQNNSNTQVINPPNSAQKTE) is disordered. The segment covering 330–339 (GYKDKPKDKP) has biased composition (basic and acidic residues). Over residues 340–362 (SNTTQNNANNNQQNSAQNNSNTQ) the composition is skewed to low complexity. Over residues 363–374 (VINPPNSAQKTE) the composition is skewed to polar residues. An Autotransporter domain is found at 1018 to 1290 (KYEKPTNVWA…ASNLGMRYSF (273 aa)).

It is found in the periplasm. It localises to the secreted. The protein localises to the cell surface. The protein resides in the cell outer membrane. Its function is as follows. Induces vacuolation of eukaryotic cells. Causes ulceration and gastric lesions. The sequence is that of Vacuolating cytotoxin autotransporter (vacA) from Helicobacter pylori (strain ATCC 700392 / 26695) (Campylobacter pylori).